Consider the following 263-residue polypeptide: Phosphatidylglycerol--prolipoprotein diacylglyceryl transferase (263 aa).

Helical transmembrane passes span 15 to 35, 52 to 72, 83 to 103, and 112 to 132; these read ISIHWYAICIVSGLLLAVYLA, FILLAFPIAIVGARLYYVIFQ, IFAIWNGGIAIYGGLIAGAAV, and AIAVLDFLDIAAPGVMIAQSI. Residue R134 coordinates a 1,2-diacyl-sn-glycero-3-phospho-(1'-sn-glycerol). 3 helical membrane passes run 170–190, 200–220, and 227–247; these read VPTFLYESLWNLVGFSIILGL, GDVTSFYLIWYGLGRFVIEGM, and FVGLRVSQWVSISIIILGAVL.

This sequence belongs to the Lgt family.

The protein localises to the cell membrane. It carries out the reaction L-cysteinyl-[prolipoprotein] + a 1,2-diacyl-sn-glycero-3-phospho-(1'-sn-glycerol) = an S-1,2-diacyl-sn-glyceryl-L-cysteinyl-[prolipoprotein] + sn-glycerol 1-phosphate + H(+). It functions in the pathway protein modification; lipoprotein biosynthesis (diacylglyceryl transfer). Functionally, catalyzes the transfer of the diacylglyceryl group from phosphatidylglycerol to the sulfhydryl group of the N-terminal cysteine of a prolipoprotein, the first step in the formation of mature lipoproteins. The chain is Phosphatidylglycerol--prolipoprotein diacylglyceryl transferase from Streptococcus thermophilus (strain CNRZ 1066).